Reading from the N-terminus, the 309-residue chain is Probable manganese-dependent inorganic pyrophosphatase (309 aa).

Mn(2+) is bound by residues His-9, Asp-13, Asp-15, Asp-75, His-97, and Asp-149.

It belongs to the PPase class C family. Mn(2+) is required as a cofactor.

Its subcellular location is the cytoplasm. It catalyses the reaction diphosphate + H2O = 2 phosphate + H(+). The chain is Probable manganese-dependent inorganic pyrophosphatase from Bacillus cereus (strain 03BB102).